Here is a 98-residue protein sequence, read N- to C-terminus: Acylphosphatase (98 aa).

The Acylphosphatase-like domain occupies 12–98; sequence TYYVRVRGVV…ERRFERFQQQ (87 aa). Active-site residues include arginine 27 and asparagine 45.

The protein belongs to the acylphosphatase family.

It carries out the reaction an acyl phosphate + H2O = a carboxylate + phosphate + H(+). This is Acylphosphatase (acyP) from Burkholderia lata (strain ATCC 17760 / DSM 23089 / LMG 22485 / NCIMB 9086 / R18194 / 383).